A 113-amino-acid chain; its full sequence is U11-theraphotoxin-Hhn1a (113 aa).

An N-terminal signal peptide occupies residues 1–21; sequence MNTVRVAFLLVFVLAVSLGQA. A propeptide spanning residues 22–74 is cleaved from the precursor; the sequence is DKDENRMEMQEKTEQGKSYLDFAENLLLQKLEELEAKLLEEDSEESRNSRQKR. The segment at 61–83 is disordered; it reads EEDSEESRNSRQKRCIGEGVPCD. Cystine bridges form between cysteine 75-cysteine 90, cysteine 82-cysteine 95, and cysteine 89-cysteine 110.

This sequence belongs to the neurotoxin 14 (magi-1) family. 01 (HNTX-16) subfamily. Expressed by the venom gland.

It is found in the secreted. Functionally, probable ion channel inhibitor. The chain is U11-theraphotoxin-Hhn1a from Cyriopagopus hainanus (Chinese bird spider).